A 95-amino-acid chain; its full sequence is Protein TRACHEARY ELEMENT DIFFERENTIATION-RELATED 6 (95 aa).

The Extracellular segment spans residues 1 to 3 (MAT). Residues 4-24 (IFIVFVSFGCVFVLGIAAFVL) form a helical membrane-spanning segment. Residues 25–95 (CCLIKKWKCS…KLGTASTSKA (71 aa)) are Cytoplasmic-facing.

In terms of assembly, interacts with the secondary cell wall (SCW)-related cellulose synthase complex. In terms of tissue distribution, accumulates in cells differentiating into tracheary element (TE) which undergo secondary cell wall (SCW) formation.

The protein resides in the cell membrane. It is found in the secreted. Its subcellular location is the cell wall. Its function is as follows. Involved in the secondary cell wall (SCW) formation of vessel elements (e.g. protoxylem and metaxylem), thus promoting tracheary element (TE) differentiation. This is Protein TRACHEARY ELEMENT DIFFERENTIATION-RELATED 6 from Zinnia elegans (Garden zinnia).